Here is an 829-residue protein sequence, read N- to C-terminus: MQCCTTPLSPHEQRLQDKIAGKEDSFRKSHERVFNILDSFDGKRPRIDVERAKLFTDSMKETEGQPLVLRWAKAMKHVAEHITVYIDDDQLICGRGGCPGRYGVLYPELDGDFLDLAIEDLPNRTESPFTITEADARVVVEEIAPYWKGKTYHEDLNLALPSDVHKLTYDDPQGLKSRFIVNETSSFRSSIQWVHDYEKVLKRGFRGLKEEAQEKIAGLDPLSPRDNVEKRPFLEAIVIVCDAIILWANRHAKLAADMAAAETNPVRKAELETMAEICAWVPENPARNFYEAVQAQWFTQMFSRLEQKTGTIVSNGRMDQYFWPFYRKDIEEGRITEESALELLECMWVGMAQYVDLYISPAGGAFNEGYAHWEAVTIGGQTPQGLDATNDLTYLFLKSKREFPLHYPDLAARIHSRSPERYLHDVAETIKFGSGFPKLINDEEIVPLYVSKGASFEEALDYAVSGCTEARMPNRDTYTSGGAYINFAAALEMVLYNGRMLKYGENELGLETGDPTRFETWEEFWNAYVLQHEHFLRAAFIQQHIINNVRARHFAQPMGSALHDLCMKHCLDLHTPQIPEGINLGYFEYMGFGTVVDSLAAIKKLVFEDKKLTMQEVIEALKCNFEGKEDVQQMLKSAPCYGNNDEYADSIAREIDAISVKYGRRYSPELGMHNDVRYVPFTSHVPFGKVVSATPNGRLAWTPLSDGSSASHGADVNGPTAVLQSNFSSKNYGYRDRAARMLNIKFTPKCVEGDEGTEKLVSFIRTFCDLKLWHVQFNVINRDTLIAAQKDPEKYRSLIVRIAGYSAYFVDLSPDLQNDLIARTQHDAM.

Positions E31–L699 constitute a PFL domain. 2-hydroxyethane-1-sulfonate contacts are provided by residues R188, Q192, C467–E469, and R677. C467 serves as the catalytic Cysteine radical intermediate. E469 (proton acceptor) is an active-site residue. The Glycine radical domain occupies D706–M829. G804 carries the glycine radical modification.

Belongs to the glycyl radical enzyme (GRE) family. In terms of assembly, homodimer. Requires the activating protein IslB to generate the key active site glycyl radical on Gly-804 that is involved in catalysis.

The enzyme catalyses 2-hydroxyethane-1-sulfonate = acetaldehyde + sulfite + H(+). The protein operates within organosulfur degradation; alkanesulfonate degradation. In terms of biological role, involved in an anaerobic respiration pathway that converts the sulfonate isethionate (2-hydroxyethanesulfonate) to ammonia, acetate and sulfide. Catalyzes the radical-mediated C-S bond cleavage of isethionate (2-hydroxyethanesulfonate) to form sulfite and acetaldehyde. This chain is Isethionate sulfite-lyase, found in Oleidesulfovibrio alaskensis (strain ATCC BAA-1058 / DSM 17464 / G20) (Desulfovibrio alaskensis).